Consider the following 433-residue polypeptide: Homoserine dehydrogenase (433 aa).

Positions 12, 13, and 102 each coordinate NADPH. An NAD(+)-binding site is contributed by valine 13. NADP(+) contacts are provided by valine 13 and lysine 102. Na(+)-binding residues include glutamate 126, valine 129, glycine 131, and isoleucine 133. NADP(+) is bound by residues glycine 184 and glutamate 187. L-homoserine is bound by residues glutamate 187 and aspartate 198. Residue lysine 202 is the Proton donor of the active site. An NADPH-binding site is contributed by glycine 303. Residue glycine 303 coordinates NAD(+). Glycine 303 is a binding site for NADP(+). Positions tyrosine 356–serine 433 constitute an ACT domain.

The protein belongs to the homoserine dehydrogenase family. The cofactor is a metal cation.

It catalyses the reaction L-homoserine + NADP(+) = L-aspartate 4-semialdehyde + NADPH + H(+). The enzyme catalyses L-homoserine + NAD(+) = L-aspartate 4-semialdehyde + NADH + H(+). It functions in the pathway amino-acid biosynthesis; L-methionine biosynthesis via de novo pathway; L-homoserine from L-aspartate: step 3/3. The protein operates within amino-acid biosynthesis; L-threonine biosynthesis; L-threonine from L-aspartate: step 3/5. Catalyzes the conversion of L-aspartate-beta-semialdehyde (L-Asa) to L-homoserine (L-Hse), the third step in the biosynthesis of threonine and methionine from aspartate. The sequence is that of Homoserine dehydrogenase (hom) from Synechocystis sp. (strain ATCC 27184 / PCC 6803 / Kazusa).